The following is a 544-amino-acid chain: Chaperonin GroEL 3 (544 aa).

ATP is bound by residues 30 to 33 (TLGP), Lys-51, 87 to 91 (DGTTT), Gly-415, and Asp-496.

This sequence belongs to the chaperonin (HSP60) family. In terms of assembly, forms a cylinder of 14 subunits composed of two heptameric rings stacked back-to-back. Interacts with the co-chaperonin GroES.

The protein resides in the cytoplasm. It carries out the reaction ATP + H2O + a folded polypeptide = ADP + phosphate + an unfolded polypeptide.. Functionally, together with its co-chaperonin GroES, plays an essential role in assisting protein folding. The GroEL-GroES system forms a nano-cage that allows encapsulation of the non-native substrate proteins and provides a physical environment optimized to promote and accelerate protein folding. This chain is Chaperonin GroEL 3, found in Rhizobium etli (strain ATCC 51251 / DSM 11541 / JCM 21823 / NBRC 15573 / CFN 42).